The chain runs to 83 residues: uncharacterized protein (83 aa).

Its subcellular location is the plastid. The protein localises to the chloroplast. This is an uncharacterized protein from Pinus thunbergii (Japanese black pine).